The sequence spans 658 residues: Alkyldihydroxyacetonephosphate synthase, peroxisomal (658 aa).

Residues Met1–Ala24 show a composition bias toward low complexity. The tract at residues Met1–Arg37 is disordered. The transit peptide at Met1–Cys58 directs the protein to the peroxisome. The segment covering Ala25–Gly35 has biased composition (basic and acidic residues). Position 65 is a phosphoserine (Ser65). Position 74 is a phosphothreonine (Thr74). At Lys102 the chain carries N6-acetyllysine. Residues Phe202 to Thr384 enclose the FAD-binding PCMH-type domain. Residues Pro234–Ser240, Asp303–Thr309, and Thr316–Ser319 contribute to the FAD site. Lys347 is modified (N6-acetyllysine). An FAD-binding site is contributed by Glu368–Ile374. A substrate-binding site is contributed by Arg515. Residue Tyr578 is the Proton donor/acceptor of the active site. 2 important for enzyme activity regions span residues His615 to His617 and Asn654 to Leu658.

Belongs to the FAD-binding oxidoreductase/transferase type 4 family. As to quaternary structure, homodimer. The cofactor is FAD.

It is found in the peroxisome membrane. It localises to the peroxisome. The catalysed reaction is a long chain fatty alcohol + a 1-acylglycerone 3-phosphate = a 1-O-alkylglycerone 3-phosphate + a long-chain fatty acid + H(+). It catalyses the reaction hexadecan-1-ol + 1-hexadecanoylglycerone 3-phosphate = 1-O-hexadecylglycerone 3-phosphate + hexadecanoate + H(+). The enzyme catalyses 1-hexadecanoylglycerone 3-phosphate + a long-chain fatty acid = a 1-acylglycerone 3-phosphate + hexadecanoate. It functions in the pathway glycerolipid metabolism; ether lipid biosynthesis. Its activity is regulated as follows. Inhibited by N-ethylmaleimide, p-bromophenacylbromide, 2,4- dinitrofluorobenzene and divalent cations such as such as Mn(2+), Mg(2+) and Zn(2+). Inhibition by p-bromophenacylbromide is strongly pH dependent and is highest at alkaline conditions. In terms of biological role, catalyzes the exchange of the acyl chain in acyl-dihydroxyacetonephosphate (acyl-DHAP) for a long chain fatty alcohol, yielding the first ether linked intermediate, i.e. alkyl-dihydroxyacetonephosphate (alkyl-DHAP), in the pathway of ether lipid biosynthesis. The polypeptide is Alkyldihydroxyacetonephosphate synthase, peroxisomal (AGPS) (Cavia porcellus (Guinea pig)).